The sequence spans 512 residues: 2,3-bisphosphoglycerate-independent phosphoglycerate mutase (512 aa).

Mn(2+) contacts are provided by Asp-11 and Ser-61. Ser-61 serves as the catalytic Phosphoserine intermediate. Substrate contacts are provided by residues His-122, 152–153, Arg-184, Arg-190, 259–262, and Lys-332; these read RD and RADR. The Mn(2+) site is built by Asp-399, His-403, Asp-440, His-441, and His-459.

Belongs to the BPG-independent phosphoglycerate mutase family. In terms of assembly, monomer. Mn(2+) is required as a cofactor.

The enzyme catalyses (2R)-2-phosphoglycerate = (2R)-3-phosphoglycerate. Its pathway is carbohydrate degradation; glycolysis; pyruvate from D-glyceraldehyde 3-phosphate: step 3/5. In terms of biological role, catalyzes the interconversion of 2-phosphoglycerate and 3-phosphoglycerate. This Francisella tularensis subsp. tularensis (strain WY96-3418) protein is 2,3-bisphosphoglycerate-independent phosphoglycerate mutase.